Consider the following 185-residue polypeptide: Urease accessory protein UreE (185 aa).

A disordered region spans residues 153-185; it reads LRANSAQGHGHSHSHSHDHHGYHHHGDGNWHKH. The segment covering 162–175 has biased composition (basic residues); it reads GHSHSHSHDHHGYH. Over residues 176–185 the composition is skewed to basic and acidic residues; sequence HHGDGNWHKH.

The protein belongs to the UreE family.

It is found in the cytoplasm. Functionally, involved in urease metallocenter assembly. Binds nickel. Probably functions as a nickel donor during metallocenter assembly. The sequence is that of Urease accessory protein UreE from Haemophilus influenzae (strain PittGG).